Reading from the N-terminus, the 618-residue chain is V-type proton ATPase catalytic subunit A (618 aa).

251–258 (GAFGCGKT) lines the ATP pocket.

The protein belongs to the ATPase alpha/beta chains family. As to quaternary structure, V-ATPase is a heteromultimeric enzyme composed of a peripheral catalytic V1 complex (main components: subunits A, B, C, D, E, and F) attached to an integral membrane V0 proton pore complex (main component: the proteolipid protein).

It carries out the reaction ATP + H2O + 4 H(+)(in) = ADP + phosphate + 5 H(+)(out). Its function is as follows. Catalytic subunit of the peripheral V1 complex of vacuolar ATPase. V-ATPase vacuolar ATPase is responsible for acidifying a variety of intracellular compartments in eukaryotic cells. The protein is V-type proton ATPase catalytic subunit A (vatA) of Dictyostelium discoideum (Social amoeba).